Consider the following 156-residue polypeptide: Nucleosome assembly protein 1-like 5 (156 aa).

A compositionally biased stretch (basic and acidic residues) spans 1–16; the sequence is MADPEKQGPAESRAED. The tract at residues 1–58 is disordered; that stretch reads MADPEKQGPAESRAEDEVMEGAQGGEDAATGDSAAAPAAEEPQAPAENAPKPKKDFME. Low complexity predominate over residues 34 to 49; it reads AAAPAAEEPQAPAENA. Residues 68 to 94 adopt a coiled-coil conformation; sequence VLALKKLQKRCDKIEAKFDKEFQALEK. Residues 120–156 are disordered; it reads TLEGEDDEDDEEEDDEEEEEEEEAAAGATGGPNFAKK. Over residues 122 to 143 the composition is skewed to acidic residues; the sequence is EGEDDEDDEEEDDEEEEEEEEA.

This sequence belongs to the nucleosome assembly protein (NAP) family.

Its subcellular location is the nucleus. The polypeptide is Nucleosome assembly protein 1-like 5 (Nap1l5) (Mus musculus (Mouse)).